The chain runs to 344 residues: Ribosomal RNA large subunit methyltransferase Cfr (344 aa).

Glutamate 90 acts as the Proton acceptor in catalysis. One can recognise a Radical SAM core domain in the interval 97–330 (KQGWESFCIS…ATVRTQFGSE (234 aa)). A disulfide bridge connects residues cysteine 104 and cysteine 335. The [4Fe-4S] cluster site is built by cysteine 111, cysteine 115, and cysteine 118. S-adenosyl-L-methionine-binding positions include 157–158 (GE), serine 188, 211–213 (SLH), and asparagine 292. The active-site S-methylcysteine intermediate is cysteine 335.

Belongs to the radical SAM superfamily. RlmN family. Cfr subfamily. Requires [4Fe-4S] cluster as cofactor.

The protein resides in the cytoplasm. It carries out the reaction adenosine(2503) in 23S rRNA + 2 reduced [2Fe-2S]-[ferredoxin] + 2 S-adenosyl-L-methionine = 8-methyladenosine(2503) in 23S rRNA + 5'-deoxyadenosine + L-methionine + 2 oxidized [2Fe-2S]-[ferredoxin] + S-adenosyl-L-homocysteine. In terms of biological role, specifically methylates position 8 of adenine 2503 in 23S rRNA. Confers resistance to some classes of antibiotics. This is Ribosomal RNA large subunit methyltransferase Cfr from Clostridium botulinum (strain Langeland / NCTC 10281 / Type F).